Here is a 43-residue protein sequence, read N- to C-terminus: Protein PsbN (43 aa).

Residues 5-27 (TLFAISISCLLVSFTGYALYTAF) traverse the membrane as a helical segment.

The protein belongs to the PsbN family.

It localises to the plastid. Its subcellular location is the chloroplast thylakoid membrane. Its function is as follows. May play a role in photosystem I and II biogenesis. This is Protein PsbN from Thuja plicata (Western red-cedar).